We begin with the raw amino-acid sequence, 1406 residues long: DNA-directed RNA polymerase subunit beta' (1406 aa).

Cys-70, Cys-72, Cys-85, and Cys-88 together coordinate Zn(2+). Residues Asp-460, Asp-462, and Asp-464 each contribute to the Mg(2+) site. Zn(2+) contacts are provided by Cys-814, Cys-888, Cys-895, and Cys-898.

It belongs to the RNA polymerase beta' chain family. The RNAP catalytic core consists of 2 alpha, 1 beta, 1 beta' and 1 omega subunit. When a sigma factor is associated with the core the holoenzyme is formed, which can initiate transcription. The cofactor is Mg(2+). Zn(2+) is required as a cofactor.

It carries out the reaction RNA(n) + a ribonucleoside 5'-triphosphate = RNA(n+1) + diphosphate. Functionally, DNA-dependent RNA polymerase catalyzes the transcription of DNA into RNA using the four ribonucleoside triphosphates as substrates. The chain is DNA-directed RNA polymerase subunit beta' from Yersinia enterocolitica serotype O:8 / biotype 1B (strain NCTC 13174 / 8081).